The sequence spans 329 residues: Malate dehydrogenase (329 aa).

12-18 (GAAGQIC) is a binding site for NAD(+). Substrate is bound by residues Arg-95 and Arg-101. NAD(+) contacts are provided by residues Asn-108, Gln-115, and 132–134 (VGN). Substrate contacts are provided by Asn-134 and Arg-165. The active-site Proton acceptor is His-190.

Belongs to the LDH/MDH superfamily. MDH type 2 family. Homodimer.

The enzyme catalyses (S)-malate + NAD(+) = oxaloacetate + NADH + H(+). Functionally, catalyzes the reversible oxidation of malate to oxaloacetate. The chain is Malate dehydrogenase from Aquaspirillum arcticum.